Reading from the N-terminus, the 303-residue chain is Glucose-1-phosphate thymidylyltransferase (303 aa).

Positions 108 and 222 each coordinate Mg(2+).

It belongs to the glucose-1-phosphate thymidylyltransferase family. The cofactor is Mg(2+).

The enzyme catalyses dTTP + alpha-D-glucose 1-phosphate + H(+) = dTDP-alpha-D-glucose + diphosphate. Its function is as follows. Catalyzes the formation of dTDP-glucose, from dTTP and glucose 1-phosphate, as well as its pyrophosphorolysis. Probably involved in the biosynthesis of the acarviose moiety of the alpha-glucosidase inhibitor acarbose. This chain is Glucose-1-phosphate thymidylyltransferase (acbA), found in Actinoplanes sp. (strain ATCC 31044 / CBS 674.73 / SE50/110).